The primary structure comprises 261 residues: DNA-directed RNA polymerase subunit Rpo3 (261 aa).

The protein belongs to the archaeal Rpo3/eukaryotic RPB3 RNA polymerase subunit family. Part of the RNA polymerase complex.

The protein resides in the cytoplasm. It catalyses the reaction RNA(n) + a ribonucleoside 5'-triphosphate = RNA(n+1) + diphosphate. Functionally, DNA-dependent RNA polymerase (RNAP) catalyzes the transcription of DNA into RNA using the four ribonucleoside triphosphates as substrates. This chain is DNA-directed RNA polymerase subunit Rpo3, found in Pyrococcus furiosus (strain ATCC 43587 / DSM 3638 / JCM 8422 / Vc1).